We begin with the raw amino-acid sequence, 144 residues long: Peptide methionine sulfoxide reductase MsrB (144 aa).

Residues Gln-5–Tyr-128 form the MsrB domain. The Nucleophile role is filled by Cys-117.

This sequence belongs to the MsrB Met sulfoxide reductase family.

The enzyme catalyses L-methionyl-[protein] + [thioredoxin]-disulfide + H2O = L-methionyl-(R)-S-oxide-[protein] + [thioredoxin]-dithiol. The chain is Peptide methionine sulfoxide reductase MsrB from Streptococcus agalactiae serotype Ia (strain ATCC 27591 / A909 / CDC SS700).